Reading from the N-terminus, the 262-residue chain is Aquaporin TIP3-1 (262 aa).

A run of 2 helical transmembrane segments spans residues 27–47 and 61–81; these read AAISEFIATAIFVFAAEGSVL and GLVAVALAHALALAVAVAVAV. Residues 89–91 carry the NPA 1 motif; sequence NPA. The next 3 membrane-spanning stretches (helical) occupy residues 104–124, 148–168, and 175–195; these read LVRAVLYWVAQLLGAVAATLL, AVLLEAVMTFGLMYAYYATVI, and VGTIAPLAVGFLLGANVLAGG. An NPA 2 motif is present at residues 203 to 205; sequence NPA. A helical membrane pass occupies residues 223 to 243; it reads YWLGPFLGAGLAGLVYEYLVI.

Belongs to the MIP/aquaporin (TC 1.A.8) family. TIP (TC 1.A.8.10) subfamily.

Its subcellular location is the vacuole membrane. Its function is as follows. Aquaporins facilitate the transport of water and small neutral solutes across cell membranes. The protein is Aquaporin TIP3-1 (TIP3-1) of Zea mays (Maize).